A 482-amino-acid chain; its full sequence is Cysteine--tRNA ligase (482 aa).

C29 lines the Zn(2+) pocket. A 'HIGH' region motif is present at residues V31–H41. Zn(2+) is bound by residues C213, H238, and E242. The 'KMSKS' region motif lies at K275–S279. An ATP-binding site is contributed by K278.

This sequence belongs to the class-I aminoacyl-tRNA synthetase family. Monomer. It depends on Zn(2+) as a cofactor.

It is found in the cytoplasm. It catalyses the reaction tRNA(Cys) + L-cysteine + ATP = L-cysteinyl-tRNA(Cys) + AMP + diphosphate. In Gloeobacter violaceus (strain ATCC 29082 / PCC 7421), this protein is Cysteine--tRNA ligase.